The sequence spans 245 residues: tRNA pseudouridine synthase A (245 aa).

D52 functions as the Nucleophile in the catalytic mechanism. Residue Y112 coordinates substrate.

This sequence belongs to the tRNA pseudouridine synthase TruA family. As to quaternary structure, homodimer.

The catalysed reaction is uridine(38/39/40) in tRNA = pseudouridine(38/39/40) in tRNA. Formation of pseudouridine at positions 38, 39 and 40 in the anticodon stem and loop of transfer RNAs. In Dictyoglomus thermophilum (strain ATCC 35947 / DSM 3960 / H-6-12), this protein is tRNA pseudouridine synthase A.